Here is a 218-residue protein sequence, read N- to C-terminus: Acetoacetyl-CoA:acetate/butyrate CoA transferase alpha subunit (218 aa).

Gly24–Gly30 provides a ligand contact to CoA.

It belongs to the 3-oxoacid CoA-transferase subunit A family. As to quaternary structure, heterotetramer composed of two alpha subunits (CtfA) and two beta subunits (CtfB).

The enzyme catalyses acetoacetate + butanoyl-CoA = acetoacetyl-CoA + butanoate. It carries out the reaction acetoacetate + acetyl-CoA = acetoacetyl-CoA + acetate. The acetate and butyrate conversion reactions are inhibited in vitro by physiological levels of acetone and butanol. Functionally, catalyzes the transfer of CoA from acetoacetyl-CoA to acetate, butyrate and propionate. Also shows low activity with valerate, isobutyrate and crotonate. Plays an important role in the metabolic shift between the acid-producing and solvent-forming states of C.acetobutylicum. Acts mainly to detoxify the medium by removing the acetate and butyrate excreted earlier in the fermentation. This is Acetoacetyl-CoA:acetate/butyrate CoA transferase alpha subunit from Clostridium acetobutylicum (strain ATCC 824 / DSM 792 / JCM 1419 / IAM 19013 / LMG 5710 / NBRC 13948 / NRRL B-527 / VKM B-1787 / 2291 / W).